Here is a 245-residue protein sequence, read N- to C-terminus: Phosphoadenosine 5'-phosphosulfate reductase (245 aa).

Residue Cys-239 is the Nucleophile; cysteine thiosulfonate intermediate of the active site.

Belongs to the PAPS reductase family. CysH subfamily.

It localises to the cytoplasm. It catalyses the reaction [thioredoxin]-disulfide + sulfite + adenosine 3',5'-bisphosphate + 2 H(+) = [thioredoxin]-dithiol + 3'-phosphoadenylyl sulfate. The protein operates within sulfur metabolism; hydrogen sulfide biosynthesis; sulfite from sulfate: step 3/3. Its function is as follows. Catalyzes the formation of sulfite from phosphoadenosine 5'-phosphosulfate (PAPS) using thioredoxin as an electron donor. This Baumannia cicadellinicola subsp. Homalodisca coagulata protein is Phosphoadenosine 5'-phosphosulfate reductase.